Consider the following 526-residue polypeptide: tRNA-2-methylthio-N(6)-dimethylallyladenosine synthase (526 aa).

Residues 14 to 130 (RTYQVRTYGC…LPTLLERARH (117 aa)) form the MTTase N-terminal domain. [4Fe-4S] cluster-binding residues include C23, C59, C93, C167, C171, and C174. A Radical SAM core domain is found at 153–401 (RESAYAGWVS…IELQERISLE (249 aa)). A TRAM domain is found at 404–483 (QAQVGRTLEL…PHHLIADGAL (80 aa)).

It belongs to the methylthiotransferase family. MiaB subfamily. Monomer. The cofactor is [4Fe-4S] cluster.

It is found in the cytoplasm. The enzyme catalyses N(6)-dimethylallyladenosine(37) in tRNA + (sulfur carrier)-SH + AH2 + 2 S-adenosyl-L-methionine = 2-methylsulfanyl-N(6)-dimethylallyladenosine(37) in tRNA + (sulfur carrier)-H + 5'-deoxyadenosine + L-methionine + A + S-adenosyl-L-homocysteine + 2 H(+). Its function is as follows. Catalyzes the methylthiolation of N6-(dimethylallyl)adenosine (i(6)A), leading to the formation of 2-methylthio-N6-(dimethylallyl)adenosine (ms(2)i(6)A) at position 37 in tRNAs that read codons beginning with uridine. This chain is tRNA-2-methylthio-N(6)-dimethylallyladenosine synthase, found in Mycobacterium sp. (strain JLS).